We begin with the raw amino-acid sequence, 242 residues long: Cysteine-rich venom protein helothermine (242 aa).

A signal peptide spans 1-19 (MILLSLYLCLAAMLHQSEG). Residues 41–169 (DKHNNLRRIV…TYKYYQVCQY (129 aa)) form the SCP domain. 8 disulfide bridges follow: Cys77–Cys155, Cys94–Cys170, Cys150–Cys167, Cys189–Cys196, Cys192–Cys201, Cys205–Cys237, Cys214–Cys231, and Cys223–Cys235. In terms of domain architecture, ShKT spans 205–237 (CKQNDVYNNCPDLKKQVGCGHPIMKDCMATCKC).

The protein belongs to the CRISP family. In terms of tissue distribution, expressed by the venom gland.

It is found in the secreted. Alters a variety of ion channel activities, including voltage-gated potassium channels (Kv), voltage-gated calcium channels (L-, N-, and P-type) (Cav) and ryanodine receptors (RyR). Is toxic to mice (causes lethargy, partial paralysis of rear limbs and lowering of body temperature). In Heloderma horridum horridum (Mexican beaded lizard), this protein is Cysteine-rich venom protein helothermine.